The following is a 488-amino-acid chain: Putative sugar transporter ERD6-like 13 (488 aa).

The next 12 helical transmembrane spans lie at 51–71, 89–109, 116–138, 151–171, 182–202, 207–227, 291–311, 324–344, 353–373, 390–410, 423–445, and 451–471; these read LILL…GTAA, LAEF…GAAM, VFGR…LMIA, LFLG…IVEI, AINS…GSVI, LALI…FIPE, VGIG…TFYL, VGVM…IVIV, LTVA…SFLF, GVLV…WVMI, GTLC…NFLF, and GVFF…MKMV.

It belongs to the major facilitator superfamily. Sugar transporter (TC 2.A.1.1) family.

Its subcellular location is the membrane. Functionally, sugar transporter. The protein is Putative sugar transporter ERD6-like 13 of Arabidopsis thaliana (Mouse-ear cress).